Here is a 510-residue protein sequence, read N- to C-terminus: NAD(P)H-quinone oxidoreductase subunit 2 B, chloroplastic (510 aa).

A run of 13 helical transmembrane segments spans residues Leu24–Leu44, Ile57–Phe77, Ile99–Ile119, Met124–Cys144, Leu149–Tyr169, Tyr183–Gly203, Pro227–Ala247, Trp295–Ile315, Met323–Asn343, Tyr354–Leu374, Ala395–Phe415, Leu418–Leu438, and Met484–Ile504.

The protein belongs to the complex I subunit 2 family. NDH is composed of at least 16 different subunits, 5 of which are encoded in the nucleus.

The protein localises to the plastid. It is found in the chloroplast thylakoid membrane. It carries out the reaction a plastoquinone + NADH + (n+1) H(+)(in) = a plastoquinol + NAD(+) + n H(+)(out). The enzyme catalyses a plastoquinone + NADPH + (n+1) H(+)(in) = a plastoquinol + NADP(+) + n H(+)(out). Its function is as follows. NDH shuttles electrons from NAD(P)H:plastoquinone, via FMN and iron-sulfur (Fe-S) centers, to quinones in the photosynthetic chain and possibly in a chloroplast respiratory chain. The immediate electron acceptor for the enzyme in this species is believed to be plastoquinone. Couples the redox reaction to proton translocation, and thus conserves the redox energy in a proton gradient. The sequence is that of NAD(P)H-quinone oxidoreductase subunit 2 B, chloroplastic from Gossypium barbadense (Sea Island cotton).